A 246-amino-acid chain; its full sequence is ATP synthase subunit a, chloroplastic (246 aa).

5 helical membrane-spanning segments follow: residues 33 to 53 (VHGQVLLVSWFVLAVIIGFGL), 99 to 119 (TIFLFVFVSNWSGALVPWALI), 133 to 153 (INTTVALALLTSIAYFYAGIN), 201 to 221 (GVLVALVPLVIPIPLMLLGLF), and 222 to 242 (TSAIQALVFSTLAGAYIGESL).

It belongs to the ATPase A chain family. In terms of assembly, F-type ATPases have 2 components, CF(1) - the catalytic core - and CF(0) - the membrane proton channel. CF(1) has five subunits: alpha(3), beta(3), gamma(1), delta(1), epsilon(1). CF(0) has four main subunits: a, b, b' and c.

It is found in the plastid. It localises to the chloroplast thylakoid membrane. In terms of biological role, key component of the proton channel; it plays a direct role in the translocation of protons across the membrane. This chain is ATP synthase subunit a, chloroplastic, found in Oltmannsiellopsis viridis (Marine flagellate).